The primary structure comprises 452 residues: Maltoporin (452 aa).

The signal sequence occupies residues 1–25; it reads MMITLRKLPLAVAVAAGVMSAQAMA.

Belongs to the porin LamB (TC 1.B.3) family. Homotrimer formed of three 18-stranded antiparallel beta-barrels, containing three independent channels.

The protein localises to the cell outer membrane. It carries out the reaction beta-maltose(in) = beta-maltose(out). In terms of biological role, involved in the transport of maltose and maltodextrins. The protein is Maltoporin of Salmonella choleraesuis (strain SC-B67).